We begin with the raw amino-acid sequence, 401 residues long: MNEVVIPSVLQDVPVRTSEPRKQNLLDLDREGLERFFADTLGEARYRAHQVMKWIHHRYVTDFDHMTDLGKALRAKLHQHAEVLVPNVVFDKPSTDGTHKWLLAMGTDGKNAIETVYIPDKGRGTLCVSSQVGCGLNCSFCSTATQGFNRNLTTAEIIGQVWVAARHLGNVPHQQRRLTNVVMMGMGEPLMNFDNVVRAMSVMRDDLGYGLASKRVTLSTSGLVPMIDRLSTESDVSLAVSLHAANDALRETLVPLNKKYPIAELMESCARYLRGSKKRDSVTFEYTLMKGINDQPEHARQLARLMRQFDNAVQSKDAGKVNLIPFNPFPGTRYERSGETEIRAFQKILLDAQVLTIVRRTRGDDIDAACGQLKGQVMDRTRRQAEFRRTLEGQADRDAAA.

Glu-114 functions as the Proton acceptor in the catalytic mechanism. Residues 120–365 (DKGRGTLCVS…TIVRRTRGDD (246 aa)) form the Radical SAM core domain. Cysteines 127 and 370 form a disulfide. Residues Cys-134, Cys-138, and Cys-141 each coordinate [4Fe-4S] cluster. Residues 187-188 (GE), Ser-219, 241-243 (SLH), and Asn-327 contribute to the S-adenosyl-L-methionine site. The active-site S-methylcysteine intermediate is the Cys-370.

The protein belongs to the radical SAM superfamily. RlmN family. It depends on [4Fe-4S] cluster as a cofactor.

The protein resides in the cytoplasm. The enzyme catalyses adenosine(2503) in 23S rRNA + 2 reduced [2Fe-2S]-[ferredoxin] + 2 S-adenosyl-L-methionine = 2-methyladenosine(2503) in 23S rRNA + 5'-deoxyadenosine + L-methionine + 2 oxidized [2Fe-2S]-[ferredoxin] + S-adenosyl-L-homocysteine. It catalyses the reaction adenosine(37) in tRNA + 2 reduced [2Fe-2S]-[ferredoxin] + 2 S-adenosyl-L-methionine = 2-methyladenosine(37) in tRNA + 5'-deoxyadenosine + L-methionine + 2 oxidized [2Fe-2S]-[ferredoxin] + S-adenosyl-L-homocysteine. In terms of biological role, specifically methylates position 2 of adenine 2503 in 23S rRNA and position 2 of adenine 37 in tRNAs. m2A2503 modification seems to play a crucial role in the proofreading step occurring at the peptidyl transferase center and thus would serve to optimize ribosomal fidelity. This Xanthomonas oryzae pv. oryzae (strain MAFF 311018) protein is Dual-specificity RNA methyltransferase RlmN.